The primary structure comprises 308 residues: NAD kinase (308 aa).

D86 functions as the Proton acceptor in the catalytic mechanism. NAD(+) is bound by residues 86-87, R91, 160-161, D190, and 201-206; these read DG, NE, and TAYAFS.

The protein belongs to the NAD kinase family. It depends on a divalent metal cation as a cofactor.

It is found in the cytoplasm. The enzyme catalyses NAD(+) + ATP = ADP + NADP(+) + H(+). Functionally, involved in the regulation of the intracellular balance of NAD and NADP, and is a key enzyme in the biosynthesis of NADP. Catalyzes specifically the phosphorylation on 2'-hydroxyl of the adenosine moiety of NAD to yield NADP. This chain is NAD kinase, found in Mycolicibacterium paratuberculosis (strain ATCC BAA-968 / K-10) (Mycobacterium paratuberculosis).